Reading from the N-terminus, the 354-residue chain is 3-dehydroquinate synthase (354 aa).

NAD(+) contacts are provided by residues 100–104 (GATGD), 124–125 (TT), lysine 136, lysine 145, and 163–166 (FLKT). Glutamate 178, histidine 242, and histidine 256 together coordinate Zn(2+).

Belongs to the sugar phosphate cyclases superfamily. Dehydroquinate synthase family. Requires Co(2+) as cofactor. It depends on Zn(2+) as a cofactor. The cofactor is NAD(+).

It localises to the cytoplasm. It carries out the reaction 7-phospho-2-dehydro-3-deoxy-D-arabino-heptonate = 3-dehydroquinate + phosphate. It participates in metabolic intermediate biosynthesis; chorismate biosynthesis; chorismate from D-erythrose 4-phosphate and phosphoenolpyruvate: step 2/7. In terms of biological role, catalyzes the conversion of 3-deoxy-D-arabino-heptulosonate 7-phosphate (DAHP) to dehydroquinate (DHQ). This chain is 3-dehydroquinate synthase, found in Staphylococcus aureus (strain NCTC 8325 / PS 47).